Reading from the N-terminus, the 1012-residue chain is DNA polymerase catalytic subunit (1012 aa).

It belongs to the DNA polymerase type-B family.

It localises to the host nucleus. It carries out the reaction DNA(n) + a 2'-deoxyribonucleoside 5'-triphosphate = DNA(n+1) + diphosphate. The polypeptide is DNA polymerase catalytic subunit (U38) (Homo sapiens (Human)).